The following is a 127-amino-acid chain: MORF4 family-associated protein 1 (127 aa).

Residues 92–126 (RAAKRCEKAEEKAKEIAKMAEMLVELVRRIEKSES) are a coiled coil.

Belongs to the MORF4 family-associated protein family. As to quaternary structure, found in a complex composed of MORF4L1, MRFAP1 and RB1. Interacts via its N-terminus with MORF4L1. Interacts with CSTB and MORF4L2.

The protein resides in the nucleus. The protein localises to the cytoplasm. Its subcellular location is the perinuclear region. The chain is MORF4 family-associated protein 1 from Homo sapiens (Human).